The sequence spans 194 residues: dITP/XTP pyrophosphatase (194 aa).

8–13 (TSNPGK) lines the substrate pocket. Residues Glu38 and Asp67 each coordinate Mg(2+). The Proton acceptor role is filled by Asp67. Substrate-binding positions include Ser68, 152 to 155 (FGYD), Lys175, and 180 to 181 (HR).

Belongs to the HAM1 NTPase family. As to quaternary structure, homodimer. It depends on Mg(2+) as a cofactor.

The catalysed reaction is XTP + H2O = XMP + diphosphate + H(+). It carries out the reaction dITP + H2O = dIMP + diphosphate + H(+). The enzyme catalyses ITP + H2O = IMP + diphosphate + H(+). Functionally, pyrophosphatase that catalyzes the hydrolysis of nucleoside triphosphates to their monophosphate derivatives, with a high preference for the non-canonical purine nucleotides XTP (xanthosine triphosphate), dITP (deoxyinosine triphosphate) and ITP. Seems to function as a house-cleaning enzyme that removes non-canonical purine nucleotides from the nucleotide pool, thus preventing their incorporation into DNA/RNA and avoiding chromosomal lesions. The protein is dITP/XTP pyrophosphatase of Legionella pneumophila (strain Lens).